Here is a 236-residue protein sequence, read N- to C-terminus: Probable metal transport system ATP-binding protein TC_0697 (236 aa).

The 232-residue stretch at 5–236 (LILENVSFRY…FCCNTFGKCS (232 aa)) folds into the ABC transporter domain. 39–46 (GPNGGGKT) is an ATP binding site.

This sequence belongs to the ABC transporter superfamily.

The protein localises to the cell inner membrane. Functionally, part of an ATP-driven transport system TC_0696/TC_0697/TC_0698 for a metal. Probably responsible for energy coupling to the transport system. This Chlamydia muridarum (strain MoPn / Nigg) protein is Probable metal transport system ATP-binding protein TC_0697.